The chain runs to 410 residues: NADH-quinone oxidoreductase subunit D (410 aa).

This sequence belongs to the complex I 49 kDa subunit family. As to quaternary structure, NDH-1 is composed of 14 different subunits. Subunits NuoB, C, D, E, F, and G constitute the peripheral sector of the complex.

The protein localises to the cell inner membrane. It catalyses the reaction a quinone + NADH + 5 H(+)(in) = a quinol + NAD(+) + 4 H(+)(out). Its function is as follows. NDH-1 shuttles electrons from NADH, via FMN and iron-sulfur (Fe-S) centers, to quinones in the respiratory chain. The immediate electron acceptor for the enzyme in this species is believed to be ubiquinone. Couples the redox reaction to proton translocation (for every two electrons transferred, four hydrogen ions are translocated across the cytoplasmic membrane), and thus conserves the redox energy in a proton gradient. The sequence is that of NADH-quinone oxidoreductase subunit D from Nitratiruptor sp. (strain SB155-2).